The sequence spans 79 residues: Small ribosomal subunit protein bS18 (79 aa).

This sequence belongs to the bacterial ribosomal protein bS18 family. In terms of assembly, part of the 30S ribosomal subunit. Forms a tight heterodimer with protein bS6.

Binds as a heterodimer with protein bS6 to the central domain of the 16S rRNA, where it helps stabilize the platform of the 30S subunit. This chain is Small ribosomal subunit protein bS18, found in Latilactobacillus sakei subsp. sakei (strain 23K) (Lactobacillus sakei subsp. sakei).